We begin with the raw amino-acid sequence, 164 residues long: Phosphopantetheine adenylyltransferase (164 aa).

Residue Ser9 coordinates substrate. Residues 9 to 10 (SF) and His17 each bind ATP. Substrate contacts are provided by Lys41, Leu73, and Arg87. ATP-binding positions include Glu98 and 122–128 (YSFLSSS).

The protein belongs to the bacterial CoaD family. In terms of assembly, homohexamer. It depends on Mg(2+) as a cofactor.

It localises to the cytoplasm. The catalysed reaction is (R)-4'-phosphopantetheine + ATP + H(+) = 3'-dephospho-CoA + diphosphate. Its pathway is cofactor biosynthesis; coenzyme A biosynthesis; CoA from (R)-pantothenate: step 4/5. Its function is as follows. Reversibly transfers an adenylyl group from ATP to 4'-phosphopantetheine, yielding dephospho-CoA (dPCoA) and pyrophosphate. This Thermobifida fusca (strain YX) protein is Phosphopantetheine adenylyltransferase.